Here is an 802-residue protein sequence, read N- to C-terminus: Fibroblast growth factor receptor 3 (802 aa).

Positions 27–115 (PDYLMVEQPP…ILRNFTIRVT (89 aa)) constitute an Ig-like C2-type 1 domain. The cysteines at positions 52 and 98 are disulfide-linked. N-linked (GlcNAc...) asparagine glycans are attached at residues asparagine 74, asparagine 87, and asparagine 109. Residues 116–148 (DLPSSGDDEDDDDDDDDETEDREPPRWTQPERM) form a disordered region. Residues 121–136 (GDDEDDDDDDDDETED) show a composition bias toward acidic residues. The segment covering 137 to 148 (REPPRWTQPERM) has biased composition (basic and acidic residues). Ig-like C2-type domains lie at 140–233 (PRWT…YQLD) and 242–342 (PILQ…FWLH). Cysteine 165 and cysteine 217 are oxidised to a cystine. N-linked (GlcNAc...) asparagine glycans are attached at residues asparagine 214, asparagine 251, asparagine 283, asparagine 303, and asparagine 315. Cysteines 264 and 326 form a disulfide. Residues 363-383 (ITVLIVVTSTIVFILLVIIVI) traverse the membrane as a helical segment. Topologically, residues 384–802 (THLMKVPSKK…HQQHNGAIPT (419 aa)) are cytoplasmic. The Protein kinase domain occupies 462–751 (LTLGKPLGEG…LTVTSTNEYL (290 aa)). Residues 468-476 (LGEGCFGQV) and lysine 498 each bind ATP. Aspartate 607 functions as the Proton acceptor in the catalytic mechanism. Phosphotyrosine; by autocatalysis occurs at positions 637, 638, 714, and 750.

It belongs to the protein kinase superfamily. Tyr protein kinase family. Fibroblast growth factor receptor subfamily. As to quaternary structure, monomer. Homodimer after ligand binding. Post-translationally, autophosphorylated. Binding of FGF family members together with heparan sulfate proteoglycan or heparin promotes receptor dimerization and autophosphorylation on tyrosine residues. Autophosphorylation occurs in trans between the two FGFR molecules present in the dimer.

The protein localises to the cell membrane. It catalyses the reaction L-tyrosyl-[protein] + ATP = O-phospho-L-tyrosyl-[protein] + ADP + H(+). Its activity is regulated as follows. Present in an inactive conformation in the absence of bound ligand. Ligand binding leads to dimerization and activation by autophosphorylation on tyrosine residues. Its function is as follows. Tyrosine-protein kinase that acts as a cell-surface receptor for fibroblast growth factors and plays an essential role in the regulation of cell proliferation, differentiation and apoptosis. Plays an essential role in the regulation of chondrocyte differentiation, proliferation and apoptosis, and is required for normal skeleton development. Regulates both osteogenesis and postnatal bone mineralization by osteoblasts. Promotes apoptosis in chondrocytes, but can also promote cancer cell proliferation. Phosphorylates PLCG1, CBL and FRS2. Ligand binding leads to the activation of several signaling cascades. Activation of PLCG1 leads to the production of the cellular signaling molecules diacylglycerol and inositol 1,4,5-trisphosphate. Phosphorylation of FRS2 triggers recruitment of GRB2, GAB1, PIK3R1 and SOS1, and mediates activation of RAS, MAPK1/ERK2, MAPK3/ERK1 and the MAP kinase signaling pathway, as well as of the AKT1 signaling pathway. The sequence is that of Fibroblast growth factor receptor 3 (fgfr3) from Xenopus laevis (African clawed frog).